We begin with the raw amino-acid sequence, 353 residues long: uncharacterized protein (353 aa).

The signal sequence occupies residues 1–30; sequence MHLRHLFSPRLRGSLLLGSLLVASSFSTLA.

This is an uncharacterized protein from Salmonella typhi.